The primary structure comprises 437 residues: Adenylosuccinate synthetase (437 aa).

GTP contacts are provided by residues 12–18 and 40–42; these read GDEGKGK and GHT. The active-site Proton acceptor is the D13. Residues D13 and G40 each contribute to the Mg(2+) site. Residues 13-16, 38-41, T131, R145, Q225, and T240 contribute to the IMP site; these read DEGK and NAGH. Catalysis depends on H41, which acts as the Proton donor. The disordered stretch occupies residues 281 to 304; the sequence is TELLGADGKPDADGERLGTRGHEF. The span at 288–303 shows a compositional bias: basic and acidic residues; it reads GKPDADGERLGTRGHE. 306 to 312 lines the substrate pocket; it reads TTTGRQR. An IMP-binding site is contributed by R310. GTP-binding positions include R312, 338-340, and 420-422; these read KLD and STS.

This sequence belongs to the adenylosuccinate synthetase family. Homodimer. It depends on Mg(2+) as a cofactor.

It is found in the cytoplasm. It carries out the reaction IMP + L-aspartate + GTP = N(6)-(1,2-dicarboxyethyl)-AMP + GDP + phosphate + 2 H(+). It participates in purine metabolism; AMP biosynthesis via de novo pathway; AMP from IMP: step 1/2. Its function is as follows. Plays an important role in the de novo pathway of purine nucleotide biosynthesis. Catalyzes the first committed step in the biosynthesis of AMP from IMP. The chain is Adenylosuccinate synthetase from Ruegeria sp. (strain TM1040) (Silicibacter sp.).